The sequence spans 483 residues: Probable glycosyltransferase 6 (483 aa).

Topologically, residues 1-40 (MAASETAPFGVSAASKGGGGVAGARAQHGQLAVAGRVHDA) are cytoplasmic. A helical; Signal-anchor for type II membrane protein membrane pass occupies residues 41 to 61 (LVFAAGAVAAVLVLLATASFL). The Lumenal segment spans residues 62–483 (SPMPVTNLVA…PLPFDYPAAR (422 aa)). The N-linked (GlcNAc...) asparagine glycan is linked to asparagine 144.

It belongs to the glycosyltransferase 34 family.

It localises to the golgi apparatus membrane. Probable glycosyltransferase that may be involved in the biosynthesis of xyloglucan. The chain is Probable glycosyltransferase 6 from Oryza sativa subsp. japonica (Rice).